The chain runs to 299 residues: Probable alpha-L-glutamate ligase (299 aa).

The ATP-grasp domain occupies 112-294; sequence LQLLTEQGIA…IALQMIVHIE (183 aa). ATP contacts are provided by residues Lys148, 185-186, Asp194, and 218-220; these read DF and RAN. Residues Asp255, Glu267, and Asn269 each coordinate Mg(2+). Mn(2+) contacts are provided by Asp255, Glu267, and Asn269.

This sequence belongs to the RimK family. Requires Mg(2+) as cofactor. Mn(2+) is required as a cofactor.

The polypeptide is Probable alpha-L-glutamate ligase (Histophilus somni (strain 2336) (Haemophilus somnus)).